Consider the following 402-residue polypeptide: Uroporphyrinogen decarboxylase 1, chloroplastic (402 aa).

The N-terminal 50 residues, Met1 to Arg50, are a transit peptide targeting the chloroplast. Substrate contacts are provided by residues Arg67–Arg71, Phe86, Ser116, Asp117, Tyr193, Ser248, and His363.

This sequence belongs to the uroporphyrinogen decarboxylase family. Homodimer.

The protein resides in the plastid. It localises to the chloroplast. It carries out the reaction uroporphyrinogen III + 4 H(+) = coproporphyrinogen III + 4 CO2. Its pathway is porphyrin-containing compound metabolism; protoporphyrin-IX biosynthesis; coproporphyrinogen-III from 5-aminolevulinate: step 4/4. Its function is as follows. Catalyzes the decarboxylation of four acetate groups of uroporphyrinogen-III to yield coproporphyrinogen-III. The protein is Uroporphyrinogen decarboxylase 1, chloroplastic of Oryza sativa subsp. japonica (Rice).